A 163-amino-acid chain; its full sequence is I-Kappa-B like protein N3 (163 aa).

ANK repeat units lie at residues 62-95 and 100-130; these read LGDTCIHVAALANRGKQAIQLIEKLVEYGANLNT and NGDTVLDIAVKNKDHELTVWLWKQPSINLQT.

The protein belongs to the polydnaviridae I-Kappa-B like protein family.

In terms of biological role, suppresses the host immune response through NF-kappa-B inactivation. Possesses ankyrin repeat domains required for NF-kappa-B binding but lacks the regulatory regions required for dissociation from NF-kappa-B and degradation. Therefore, prevents host NF-kappa-B release and subsequent activation. The sequence is that of I-Kappa-B like protein N3 (N6) from Microplitis demolitor (Parasitoid wasp).